The sequence spans 687 residues: A-kinase anchor protein 8 (687 aa).

The tract at residues M1–F195 is interaction with MCM2. An interaction with DPY30 region spans residues M1–F210. S72 is subject to Phosphoserine. Residues S104–S124 are disordered. R109 is modified (asymmetric dimethylarginine; alternate). Residue R109 is modified to Omega-N-methylarginine; alternate. A compositionally biased stretch (gly residues) spans R109 to G118. Residues R109–S201 form an interaction with DDX5 region. The interval R127 to Y152 is nuclear matrix targeting site. Residues G189–S221 are disordered. Phosphoserine is present on S199. Omega-N-methylarginine is present on residues R233 and R277. A disordered region spans residues S278–D380. Composition is skewed to basic and acidic residues over residues R281–G295 and P312–S321. Residues R287–K304 carry the Bipartite nuclear localization signal motif. Residue K315 forms a Glycyl lysine isopeptide (Lys-Gly) (interchain with G-Cter in SUMO2) linkage. Phosphoserine is present on residues S321, S326, and S337. A compositionally biased stretch (acidic residues) spans E322 to A332. Residues R336–K358 are compositionally biased toward basic and acidic residues. An involved in chromatin-binding region spans residues R385–E448. 2 consecutive C2H2 AKAP95-type zinc fingers follow at residues C390 to H412 and C479 to H502. An involved in condensin complex recruitment region spans residues S523 to T565. Position 553 is a phosphothreonine (T553). K563 is covalently cross-linked (Glycyl lysine isopeptide (Lys-Gly) (interchain with G-Cter in SUMO2)). The tract at residues E568–V585 is RII-binding. The required for interaction with MYCBP stretch occupies residues E572–G589. The tract at residues V606 to E687 is disordered. A compositionally biased stretch (basic and acidic residues) spans R633 to N648. Residues E649–I666 are compositionally biased toward low complexity. Phosphoserine is present on S659.

This sequence belongs to the AKAP95 family. Binds to dimeric RII-alpha regulatory subunit of PKA during mitosis. Interacts (via C-terminus) with FIGN. Interacts with NCAPD2, CCND1, CCND3, MCM2, RPS6KA1, PDE4A, CASP3. Interacts with DDX5, CCNE1. Interacts with NFKB1; detetcted in the cytoplasm. Interacts with MYCBP; MYCBP is translocated to the nucleus and the interaction prevents the association of the PKA catalytic subunit leading to suppression of PKA activity. Interacts with DPY30; mediating AKAP8 association with at least the MLL4/WBP7 HMT complex. Interacts with HDAC3; increased during mitosis. Interacts with GJA1; in the nucleus and in the nuclear membrane; the nuclear association increases with progress of cell cycle G1, S and G2 phase and decreases in M phase. In terms of processing, phosphorylated on tyrosine residues probably by SRC subfamily protein kinases; multiple phosphorylation is leading to dissociation from nuclear structures implicated in chromatin structural changes. Widely expressed. The protein has been detected in liver, fibroblasts, granulosa, myoblast, lymphoma and Sertoli cells.

It is found in the nucleus matrix. The protein localises to the nucleus. Its subcellular location is the nucleolus. The protein resides in the cytoplasm. In terms of biological role, anchoring protein that mediates the subcellular compartmentation of cAMP-dependent protein kinase (PKA type II). Acts as an anchor for a PKA-signaling complex onto mitotic chromosomes, which is required for maintenance of chromosomes in a condensed form throughout mitosis. Recruits condensin complex subunit NCAPD2 to chromosomes required for chromatin condensation; the function appears to be independent from PKA-anchoring. May help to deliver cyclin D/E to CDK4 to facilitate cell cycle progression. Required for cell cycle G2/M transition and histone deacetylation during mitosis. In mitotic cells recruits HDAC3 to the vicinity of chromatin leading to deacetylation and subsequent phosphorylation at 'Ser-10' of histone H3; in this function may act redundantly with AKAP8L. Involved in nuclear retention of RPS6KA1 upon ERK activation thus inducing cell proliferation. May be involved in regulation of DNA replication by acting as scaffold for MCM2. Enhances HMT activity of the KMT2 family MLL4/WBP7 complex and is involved in transcriptional regulation. In a teratocarcinoma cell line is involved in retinoic acid-mediated induction of developmental genes implicating H3 'Lys-4' methylation. May be involved in recruitment of active CASP3 to the nucleus in apoptotic cells. May act as a carrier protein of GJA1 for its transport to the nucleus. May play a repressive role in the regulation of rDNA transcription. Preferentially binds GC-rich DNA in vitro. In cells, associates with ribosomal RNA (rRNA) chromatin, preferentially with rRNA promoter and transcribed regions. Involved in modulation of Toll-like receptor signaling. Required for the cAMP-dependent suppression of TNF-alpha in early stages of LPS-induced macrophage activation; the function probably implicates targeting of PKA to NFKB1. This is A-kinase anchor protein 8 (Akap8) from Rattus norvegicus (Rat).